A 719-amino-acid chain; its full sequence is uncharacterized protein (719 aa).

The stretch at 64–100 forms a coiled coil; the sequence is IQNLNQRKEEVIRLIAEQDKLTDNLKRKIEQSVKLQE. An S1 motif domain is found at 649 to 718; the sequence is GMELQGTVRN…QKGRVSLSMV (70 aa).

This is an uncharacterized protein from Bacillus subtilis (strain 168).